The sequence spans 940 residues: Beta-mannosidase A (940 aa).

Residues 1–21 form the signal peptide; sequence MHFHGIATQAVLASNITTGSG. Residues N15, N39, N79, N245, N314, N321, and N344 are each glycosylated (N-linked (GlcNAc...) asparagine). The Proton donor role is filled by E476. 7 N-linked (GlcNAc...) asparagine glycosylation sites follow: N534, N605, N626, N653, N733, N761, and N785.

Belongs to the glycosyl hydrolase 2 family. Beta-mannosidase A subfamily. As to quaternary structure, homodimer.

The protein resides in the secreted. It carries out the reaction Hydrolysis of terminal, non-reducing beta-D-mannose residues in beta-D-mannosides.. The protein operates within glycan metabolism; N-glycan degradation. Functionally, exoglycosidase that cleaves the single beta-linked mannose residue from the non-reducing end of beta-mannosidic oligosaccharides of various complexity and length. Involved in the degradation of polymeric mannan and galactomannan. This Emericella nidulans (strain FGSC A4 / ATCC 38163 / CBS 112.46 / NRRL 194 / M139) (Aspergillus nidulans) protein is Beta-mannosidase A (mndA).